A 381-amino-acid polypeptide reads, in one-letter code: Creatine kinase B-type (381 aa).

At serine 4 the chain carries Phosphoserine. The 88-residue stretch at 11–98 folds into the Phosphagen kinase N-terminal domain; sequence KLRFPAEDEF…FDPIIEDRHG (88 aa). Phosphothreonine is present on threonine 35. Residue lysine 45 forms a Glycyl lysine isopeptide (Lys-Gly) (interchain with G-Cter in ubiquitin) linkage. Valine 72 is a creatine binding site. The segment covering 96–110 has biased composition (basic and acidic residues); it reads RHGGYKPSDEHKTDL. Residues 96–123 are disordered; that stretch reads RHGGYKPSDEHKTDLNPDNLQGGDDLDP. Residues lysine 101 and lysine 107 each participate in a glycyl lysine isopeptide (Lys-Gly) (interchain with G-Cter in ubiquitin) cross-link. At tyrosine 125 the chain carries Phosphotyrosine. Residues 125–367 enclose the Phosphagen kinase C-terminal domain; it reads YVLSSRVRTG…KLLIEMEQRL (243 aa). ATP-binding positions include 128–132, arginine 130, arginine 132, and histidine 191; that span reads SSRVR. Residues 130-138 are internal MTS-like signal; that stretch reads RVRTGRSIR. Serine 199 is subject to Phosphoserine. Glutamate 232 is a creatine binding site. Arginine 236 is a binding site for ATP. At tyrosine 269 the chain carries 3'-nitrotyrosine. Creatine is bound at residue serine 285. Arginine 292 contacts ATP. Residue serine 309 is modified to Phosphoserine. ATP contacts are provided by residues arginine 320, 320 to 325, and aspartate 335; that span reads RGTGGV. A Phosphothreonine modification is found at threonine 322. Lysine 381 is covalently cross-linked (Glycyl lysine isopeptide (Lys-Gly) (interchain with G-Cter in ubiquitin)).

This sequence belongs to the ATP:guanido phosphotransferase family. In terms of assembly, dimer of identical or non-identical chains, which can be either B (brain type) or M (muscle type). With MM being the major form in skeletal muscle and myocardium, MB existing in myocardium, and BB existing in many tissues, especially brain. Interacts with SLC12A6 (via C-terminus); the interaction may be required for SLC12A6 potassium-chloride cotransport activity. Ubiquitinated by the ECS(ASB9) complex, leading to its degradation by the proteasome.

The protein localises to the cytoplasm. The protein resides in the cytosol. It localises to the mitochondrion. It is found in the cell membrane. It catalyses the reaction creatine + ATP = N-phosphocreatine + ADP + H(+). Reversibly catalyzes the transfer of phosphate between ATP and various phosphogens (e.g. creatine phosphate). Creatine kinase isoenzymes play a central role in energy transduction in tissues with large, fluctuating energy demands, such as skeletal muscle, heart, brain and spermatozoa. Acts as a key regulator of adaptive thermogenesis as part of the futile creatine cycle: localizes to the mitochondria of thermogenic fat cells and acts by mediating phosphorylation of creatine to initiate a futile cycle of creatine phosphorylation and dephosphorylation. During the futile creatine cycle, creatine and N-phosphocreatine are in a futile cycle, which dissipates the high energy charge of N-phosphocreatine as heat without performing any mechanical or chemical work. In Oryctolagus cuniculus (Rabbit), this protein is Creatine kinase B-type (CKB).